Here is a 309-residue protein sequence, read N- to C-terminus: Homoserine O-succinyltransferase (309 aa).

The active-site Acyl-thioester intermediate is C142. 2 residues coordinate substrate: K163 and S192. H235 (proton acceptor) is an active-site residue. The active site involves E237. Residue R249 participates in substrate binding.

This sequence belongs to the MetA family.

It localises to the cytoplasm. The catalysed reaction is L-homoserine + succinyl-CoA = O-succinyl-L-homoserine + CoA. It participates in amino-acid biosynthesis; L-methionine biosynthesis via de novo pathway; O-succinyl-L-homoserine from L-homoserine: step 1/1. Functionally, transfers a succinyl group from succinyl-CoA to L-homoserine, forming succinyl-L-homoserine. In Citrobacter koseri (strain ATCC BAA-895 / CDC 4225-83 / SGSC4696), this protein is Homoserine O-succinyltransferase.